A 195-amino-acid chain; its full sequence is Imidazoleglycerol-phosphate dehydratase (195 aa).

Belongs to the imidazoleglycerol-phosphate dehydratase family.

The protein resides in the cytoplasm. It catalyses the reaction D-erythro-1-(imidazol-4-yl)glycerol 3-phosphate = 3-(imidazol-4-yl)-2-oxopropyl phosphate + H2O. It participates in amino-acid biosynthesis; L-histidine biosynthesis; L-histidine from 5-phospho-alpha-D-ribose 1-diphosphate: step 6/9. The polypeptide is Imidazoleglycerol-phosphate dehydratase (Bordetella bronchiseptica (strain ATCC BAA-588 / NCTC 13252 / RB50) (Alcaligenes bronchisepticus)).